Consider the following 458-residue polypeptide: Glutamyl-tRNA(Gln) amidotransferase subunit D (458 aa).

The 338-residue stretch at 97-434 folds into the Asparaginase/glutaminase domain; that stretch reads PNVSVMSTGG…KEVERLMRTN (338 aa). Active-site residues include Thr107, Thr185, Asp186, and Lys264.

The protein belongs to the asparaginase 1 family. GatD subfamily. As to quaternary structure, heterodimer of GatD and GatE.

The catalysed reaction is L-glutamyl-tRNA(Gln) + L-glutamine + ATP + H2O = L-glutaminyl-tRNA(Gln) + L-glutamate + ADP + phosphate + H(+). Functionally, allows the formation of correctly charged Gln-tRNA(Gln) through the transamidation of misacylated Glu-tRNA(Gln) in organisms which lack glutaminyl-tRNA synthetase. The reaction takes place in the presence of glutamine and ATP through an activated gamma-phospho-Glu-tRNA(Gln). The GatDE system is specific for glutamate and does not act on aspartate. The sequence is that of Glutamyl-tRNA(Gln) amidotransferase subunit D from Methanopyrus kandleri (strain AV19 / DSM 6324 / JCM 9639 / NBRC 100938).